Here is a 568-residue protein sequence, read N- to C-terminus: Cytochrome P450 monooxygenase 41 (568 aa).

A helical transmembrane segment spans residues 21 to 41 (LTSLVPLILSVMVCLIATVTI). Residues N321 and N377 are each glycosylated (N-linked (GlcNAc...) asparagine). C514 contributes to the heme binding site.

This sequence belongs to the cytochrome P450 family. It depends on heme as a cofactor.

It is found in the membrane. The protein operates within secondary metabolite biosynthesis. In terms of biological role, cytochrome P450 monooxygenase that is able to use 3,5-dimethoxy-trans-stilbene and 3,5,4'-trimethoxy-trans-stilbene as substrates for oxidation. The polypeptide is Cytochrome P450 monooxygenase 41 (Postia placenta (strain ATCC 44394 / Madison 698-R) (Brown rot fungus)).